The chain runs to 595 residues: Putative laccase-18 (595 aa).

Positions 1 to 29 (MEKLSTAASLFGVVVAATALAMAVVGGEA) are cleaved as a signal peptide. 2 Plastocyanin-like domains span residues 37–153 (MVHE…PRDG) and 162–316 (KDVP…YTGA). Residues asparagine 42 and asparagine 48 are each glycosylated (N-linked (GlcNAc...) asparagine). The Cu cation site is built by histidine 87 and histidine 89. Residue asparagine 121 is glycosylated (N-linked (GlcNAc...) asparagine). Positions 132 and 134 each coordinate Cu cation. N-linked (GlcNAc...) asparagine glycosylation is found at asparagine 206, asparagine 345, asparagine 382, asparagine 402, asparagine 409, asparagine 439, and asparagine 470. A Plastocyanin-like 3 domain is found at 429-571 (DFPVRPPRPF…ATAFIVEDGP (143 aa)). The Cu cation site is built by asparagine 488, histidine 491, histidine 493, histidine 550, cysteine 551, histidine 552, histidine 556, and methionine 561. The disordered stretch occupies residues 570–595 (GPTPETSLPPPPPEFKRCGTNGLSQP).

It belongs to the multicopper oxidase family. The cofactor is Cu cation.

It localises to the secreted. It is found in the extracellular space. The protein resides in the apoplast. It carries out the reaction 4 hydroquinone + O2 = 4 benzosemiquinone + 2 H2O. Lignin degradation and detoxification of lignin-derived products. The polypeptide is Putative laccase-18 (LAC18) (Oryza sativa subsp. indica (Rice)).